Consider the following 424-residue polypeptide: 3-phosphoshikimate 1-carboxyvinyltransferase (424 aa).

Residues K21, S22, and R26 each coordinate 3-phosphoshikimate. K21 is a phosphoenolpyruvate binding site. Residues G92 and R120 each contribute to the phosphoenolpyruvate site. Residues S163, S164, Q165, S191, D306, and K333 each coordinate 3-phosphoshikimate. Phosphoenolpyruvate is bound at residue Q165. D306 (proton acceptor) is an active-site residue. Residues R337, R379, and K405 each contribute to the phosphoenolpyruvate site.

The protein belongs to the EPSP synthase family. Monomer.

The protein localises to the cytoplasm. It carries out the reaction 3-phosphoshikimate + phosphoenolpyruvate = 5-O-(1-carboxyvinyl)-3-phosphoshikimate + phosphate. It participates in metabolic intermediate biosynthesis; chorismate biosynthesis; chorismate from D-erythrose 4-phosphate and phosphoenolpyruvate: step 6/7. In terms of biological role, catalyzes the transfer of the enolpyruvyl moiety of phosphoenolpyruvate (PEP) to the 5-hydroxyl of shikimate-3-phosphate (S3P) to produce enolpyruvyl shikimate-3-phosphate and inorganic phosphate. The chain is 3-phosphoshikimate 1-carboxyvinyltransferase from Clostridium perfringens (strain ATCC 13124 / DSM 756 / JCM 1290 / NCIMB 6125 / NCTC 8237 / Type A).